A 468-amino-acid polypeptide reads, in one-letter code: UDP-N-acetylmuramoylalanine--D-glutamate ligase (468 aa).

G117 to T123 serves as a coordination point for ATP.

The protein belongs to the MurCDEF family.

It is found in the cytoplasm. It catalyses the reaction UDP-N-acetyl-alpha-D-muramoyl-L-alanine + D-glutamate + ATP = UDP-N-acetyl-alpha-D-muramoyl-L-alanyl-D-glutamate + ADP + phosphate + H(+). It participates in cell wall biogenesis; peptidoglycan biosynthesis. In terms of biological role, cell wall formation. Catalyzes the addition of glutamate to the nucleotide precursor UDP-N-acetylmuramoyl-L-alanine (UMA). The sequence is that of UDP-N-acetylmuramoylalanine--D-glutamate ligase from Chloroherpeton thalassium (strain ATCC 35110 / GB-78).